Consider the following 514-residue polypeptide: Folylpolyglutamate synthase (514 aa).

G82–S85 is a binding site for ATP. Residues S107, E186, and H214 each coordinate Mg(2+). 2 residues coordinate ATP: R339 and D355.

It belongs to the folylpolyglutamate synthase family. It depends on a monovalent cation as a cofactor.

The protein resides in the mitochondrion inner membrane. It localises to the mitochondrion matrix. It is found in the cytoplasm. It carries out the reaction (6S)-5,6,7,8-tetrahydrofolyl-(gamma-L-Glu)(n) + L-glutamate + ATP = (6S)-5,6,7,8-tetrahydrofolyl-(gamma-L-Glu)(n+1) + ADP + phosphate + H(+). The protein operates within cofactor biosynthesis; tetrahydrofolylpolyglutamate biosynthesis. Catalyzes conversion of folates to polyglutamate derivatives allowing concentration of folate compounds in the cell and the intracellular retention of these cofactors, which are important substrates for most of the folate-dependent enzymes that are involved in one-carbon transfer reactions involved in purine, pyrimidine and amino acid synthesis. The protein is Folylpolyglutamate synthase (MET7) of Candida albicans (Yeast).